A 422-amino-acid chain; its full sequence is Tyrosine--tRNA ligase (422 aa).

Tyr36 serves as a coordination point for L-tyrosine. The short motif at Pro41–His50 is the 'HIGH' region element. L-tyrosine-binding residues include Tyr174 and Gln178. The short motif at Lys234–Thr238 is the 'KMSKS' region element. Lys237 provides a ligand contact to ATP. The region spanning Thr356 to Trp420 is the S4 RNA-binding domain.

This sequence belongs to the class-I aminoacyl-tRNA synthetase family. TyrS type 1 subfamily. Homodimer.

The protein localises to the cytoplasm. The enzyme catalyses tRNA(Tyr) + L-tyrosine + ATP = L-tyrosyl-tRNA(Tyr) + AMP + diphosphate + H(+). In terms of biological role, catalyzes the attachment of tyrosine to tRNA(Tyr) in a two-step reaction: tyrosine is first activated by ATP to form Tyr-AMP and then transferred to the acceptor end of tRNA(Tyr). The polypeptide is Tyrosine--tRNA ligase (Aeromonas hydrophila subsp. hydrophila (strain ATCC 7966 / DSM 30187 / BCRC 13018 / CCUG 14551 / JCM 1027 / KCTC 2358 / NCIMB 9240 / NCTC 8049)).